We begin with the raw amino-acid sequence, 93 residues long: Putative pterin-4-alpha-carbinolamine dehydratase (93 aa).

It belongs to the pterin-4-alpha-carbinolamine dehydratase family.

The catalysed reaction is (4aS,6R)-4a-hydroxy-L-erythro-5,6,7,8-tetrahydrobiopterin = (6R)-L-erythro-6,7-dihydrobiopterin + H2O. This Sulfurisphaera tokodaii (strain DSM 16993 / JCM 10545 / NBRC 100140 / 7) (Sulfolobus tokodaii) protein is Putative pterin-4-alpha-carbinolamine dehydratase.